The chain runs to 180 residues: NAD(P)H-quinone oxidoreductase subunit I, chloroplastic (180 aa).

4Fe-4S ferredoxin-type domains are found at residues 55 to 84 (GRIH…VDWR) and 95 to 124 (LNYS…MTEE). [4Fe-4S] cluster-binding residues include Cys64, Cys67, Cys70, Cys74, Cys104, Cys107, Cys110, and Cys114.

The protein belongs to the complex I 23 kDa subunit family. In terms of assembly, NDH is composed of at least 16 different subunits, 5 of which are encoded in the nucleus. It depends on [4Fe-4S] cluster as a cofactor.

It localises to the plastid. The protein localises to the chloroplast thylakoid membrane. It carries out the reaction a plastoquinone + NADH + (n+1) H(+)(in) = a plastoquinol + NAD(+) + n H(+)(out). The catalysed reaction is a plastoquinone + NADPH + (n+1) H(+)(in) = a plastoquinol + NADP(+) + n H(+)(out). Its function is as follows. NDH shuttles electrons from NAD(P)H:plastoquinone, via FMN and iron-sulfur (Fe-S) centers, to quinones in the photosynthetic chain and possibly in a chloroplast respiratory chain. The immediate electron acceptor for the enzyme in this species is believed to be plastoquinone. Couples the redox reaction to proton translocation, and thus conserves the redox energy in a proton gradient. The chain is NAD(P)H-quinone oxidoreductase subunit I, chloroplastic from Dioscorea elephantipes (Elephant's foot yam).